A 485-amino-acid polypeptide reads, in one-letter code: Cytosol non-specific dipeptidase (485 aa).

Residue H76 coordinates Zn(2+). The active site involves D78. D115 contributes to the Zn(2+) binding site. Catalysis depends on E145, which acts as the Proton acceptor. E146 and D169 together coordinate Zn(2+). K296 carries the N6-acetyllysine modification. Position 457 (H457) interacts with Zn(2+).

Belongs to the peptidase M20C family. The cofactor is Zn(2+). Requires Co(2+) as cofactor.

It catalyses the reaction Hydrolysis of dipeptides, preferentially hydrophobic dipeptides including prolyl amino acids.. Inhibited by metal chelators. Functionally, dipeptidase with broad substrate specificity. Requires dipeptide substrates with an unblocked N-terminus and the amino group in the alpha or beta position. Non-protein amino acids and proline are not accepted in the C-terminal position, whereas some dipeptide amides and formyl amino acids are hydrolyzed. Also shows cysteinylglycinase activity, which is sufficient for E.coli to utilize cysteinylglycine as a cysteine source. The polypeptide is Cytosol non-specific dipeptidase (pepD) (Escherichia coli (strain K12)).